The sequence spans 492 residues: Catalase isozyme 1 (492 aa).

Active-site residues include His65 and Asn138. Tyr348 contributes to the heme binding site.

This sequence belongs to the catalase family. As to quaternary structure, homotetramer. Heme serves as cofactor.

The protein localises to the peroxisome. The protein resides in the glyoxysome. It carries out the reaction 2 H2O2 = O2 + 2 H2O. Functionally, occurs in almost all aerobically respiring organisms and serves to protect cells from the toxic effects of hydrogen peroxide. This Solanum tuberosum (Potato) protein is Catalase isozyme 1 (CAT1).